Reading from the N-terminus, the 33-residue chain is Alpha-amanitin proprotein (33 aa).

Positions 1-10 are excised as a propeptide; the sequence is MSDINATRLP. Isoleucine 11 is subject to (3R,4R)-4,5-dihydroxyisoleucine; in form alpha-amanitin. Isoleucine 11 carries the post-translational modification (3R,4S)-4-hydroxyisoleucine; in form gamma-amanitin. The segment at residues 11–18 is a cross-link (cyclopeptide (Ile-Pro)); it reads IWGIGCNP. The 2'-cysteinyl-6'-hydroxytryptophan sulfoxide (Trp-Cys) cross-link spans 12 to 16; the sequence is WGIGC. Proline 18 carries the post-translational modification 4-hydroxyproline. A propeptide spanning residues 19–33 is cleaved from the precursor; the sequence is CVGDEVTALITRGEA.

It belongs to the MSDIN fungal toxin family. Processed by the macrocyclase-peptidase enzyme POPB to yield a toxic cyclic decapeptide. POPB first removes 10 residues from the N-terminus. Conformational trapping of the remaining peptide forces the enzyme to release this intermediate rather than proceed to macrocyclization. The enzyme rebinds the remaining peptide in a different conformation and catalyzes macrocyclization of the N-terminal 8 residues.

In terms of biological role, major toxin belonging to the bicyclic octapeptides amatoxins that acts by binding non-competitively to RNA polymerase II and greatly slowing the elongation of transcripts from target promoters. This is Alpha-amanitin proprotein from Amanita pallidorosea.